We begin with the raw amino-acid sequence, 234 residues long: Large ribosomal subunit protein bL25 (234 aa).

This sequence belongs to the bacterial ribosomal protein bL25 family. CTC subfamily. In terms of assembly, part of the 50S ribosomal subunit; part of the 5S rRNA/L5/L18/L25 subcomplex. Contacts the 5S rRNA. Binds to the 5S rRNA independently of L5 and L18.

This is one of the proteins that binds to the 5S RNA in the ribosome where it forms part of the central protuberance. This chain is Large ribosomal subunit protein bL25, found in Rhodopseudomonas palustris (strain BisA53).